The primary structure comprises 469 residues: 3-isopropylmalate dehydratase large subunit (469 aa).

Positions 347, 408, and 411 each coordinate [4Fe-4S] cluster.

This sequence belongs to the aconitase/IPM isomerase family. LeuC type 1 subfamily. As to quaternary structure, heterodimer of LeuC and LeuD. The cofactor is [4Fe-4S] cluster.

The enzyme catalyses (2R,3S)-3-isopropylmalate = (2S)-2-isopropylmalate. The protein operates within amino-acid biosynthesis; L-leucine biosynthesis; L-leucine from 3-methyl-2-oxobutanoate: step 2/4. Functionally, catalyzes the isomerization between 2-isopropylmalate and 3-isopropylmalate, via the formation of 2-isopropylmaleate. This chain is 3-isopropylmalate dehydratase large subunit, found in Actinobacillus pleuropneumoniae serotype 3 (strain JL03).